Reading from the N-terminus, the 124-residue chain is Fluoride-specific ion channel FluC (124 aa).

A run of 4 helical transmembrane segments spans residues 1–21, 38–58, 69–89, and 97–117; these read MIPL…LRFA, TLAV…LFLV, GLIV…LDTV, and VALA…ATWA. Positions 76 and 79 each coordinate Na(+).

The protein belongs to the fluoride channel Fluc/FEX (TC 1.A.43) family.

The protein localises to the cell inner membrane. It catalyses the reaction fluoride(in) = fluoride(out). Its activity is regulated as follows. Na(+) is not transported, but it plays an essential structural role and its presence is essential for fluoride channel function. Functionally, fluoride-specific ion channel. Important for reducing fluoride concentration in the cell, thus reducing its toxicity. The polypeptide is Fluoride-specific ion channel FluC (Pseudomonas fluorescens (strain ATCC BAA-477 / NRRL B-23932 / Pf-5)).